A 262-amino-acid chain; its full sequence is Zinc-finger homeodomain protein 6 (262 aa).

2 stretches are compositionally biased toward basic and acidic residues: residues 1–25 and 36–47; these read MEVREKKDEKMEMTRRKSSALDHHR and NKEKPTTKRNGS. A disordered region spans residues 1-93; that stretch reads MEVREKKDEK…ECQKNHAASS (93 aa). The segment at 82–131 adopts a ZF-HD dimerization-type; degenerate zinc-finger fold; the sequence is YRECQKNHAASSGGHVVDGCGEFMSSGEEGTVESLLCAACDCHRSFHRKE. A DNA-binding region (homeobox) is located at residues 198–261; it reads KKRFRTKFNE…NNKQAAKKKD (64 aa).

As to quaternary structure, homo- and heterodimer with other ZFHD proteins. Interacts with MIF1 and MIF3; these interactions prevent nuclear localization and DNA-binding to inhibit transcription regulation activity. Binds to ZHD1, ZHD2, ZHD10 and ZHD11. As to expression, expressed in seedlings, roots, leaves, stems, flowers and inflorescence.

Its subcellular location is the nucleus. Functionally, putative transcription factor. The sequence is that of Zinc-finger homeodomain protein 6 (ZHD6) from Arabidopsis thaliana (Mouse-ear cress).